The primary structure comprises 128 residues: Fluoride-specific ion channel FluC (128 aa).

A run of 4 helical transmembrane segments spans residues 7 to 29, 36 to 57, 65 to 94, and 98 to 126; these read LNFI…LGLR, PWGT…VALI, AWIR…DMLE, and YATA…VRLL. Asn-43 is a fluoride binding site. Na(+) is bound by residues Gly-77 and Thr-80. Fluoride-binding residues include Tyr-104, Ser-108, and Ser-112.

The protein belongs to the fluoride channel Fluc/FEX (TC 1.A.43) family. As to quaternary structure, homodimer.

It is found in the cell inner membrane. It catalyses the reaction fluoride(in) = fluoride(out). With respect to regulation, na(+) is not transported, but it plays an essential structural role and its presence is essential for fluoride channel function. The Na(+)-binding site is specific for Na(+) over most other cations including K(+) and Mg(2+). Fluoride efflux is inhibited by Li(2+). Its function is as follows. Fluoride-specific ion channel. Important for reducing fluoride concentration in the cell, thus reducing its toxicity. Is highly specific for fluoride ions and cannot transport chloride ions. This is Fluoride-specific ion channel FluC from Bordetella pertussis (strain Tohama I / ATCC BAA-589 / NCTC 13251).